A 902-amino-acid chain; its full sequence is Methionine--tRNA ligase, cytoplasmic (902 aa).

The GST C-terminal domain occupies 74 to 212 (GWEQDDLTNQ…QKQPQPQPPP (139 aa)). The 'HIGH' region signature appears at 275–285 (PYVNNVPHLGN). A 'KMSKS' region motif is present at residues 595–599 (KFSKS). Lysine 598 provides a ligand contact to ATP. Position 827 is a phosphoserine (serine 827). Threonine 837 is subject to Phosphothreonine. Positions 843–899 (HIQTLTDEVTKQGNVVRELKAQKADKNQVAAEVAKLLDLKKQLALAEGKPIETPKGK) constitute a WHEP-TRS domain.

The protein belongs to the class-I aminoacyl-tRNA synthetase family. Monomer. Part of a multisubunit complex that groups tRNA ligases for Arg (RARS1), Asp (DARS1), Gln (QARS1), Ile (IARS1), Leu (LARS1), Lys (KARS1), Met (MARS1) the bifunctional ligase for Glu and Pro (EPRS1) and the auxiliary subunits AIMP1/p43, AIMP2/p38 and EEF1E1/p18. Forms a linear complex that contains MARS1, EEF1E1, EPRS1 and AIMP2 that is at the core of the multisubunit complex.

It is found in the cytoplasm. It localises to the cytosol. The protein localises to the nucleus. Its subcellular location is the nucleolus. It catalyses the reaction tRNA(Met) + L-methionine + ATP = L-methionyl-tRNA(Met) + AMP + diphosphate. Functionally, catalyzes the specific attachment of an amino acid to its cognate tRNA in a 2 step reaction: the amino acid (AA) is first activated by ATP to form AA-AMP and then transferred to the acceptor end of the tRNA. Plays a role in the synthesis of ribosomal RNA in the nucleolus. The polypeptide is Methionine--tRNA ligase, cytoplasmic (Mars1) (Mus musculus (Mouse)).